The primary structure comprises 304 residues: MKLIPLASESLGVRSLATFLEIGKIGILIDPGAALGPKRYSLSPAKAELEALQKAREKIQQYSRKAQIITISHYHYDHHTPFFEGIYESSSPEKAKDIYSRKTLFIKHPRENINFSQKKRAWAFLKEAEKIVEKIEHADGKFFDFGDFIMEFSPAVPHGSEGSKLGFVVMVMVDDGKQRLIHASDIQLLNRASKEWIIKQMPDLLITGGPPTYLEGYRVKEAWSTGLKNLNEIIKETNAEVILDHHLIRDKRYPEFLEQLEKQALTFARFLKKEDRPLEAYRKELHKIEKGEEAEVPFDVGWYL.

The protein belongs to the UPF0282 family.

In Thermococcus sibiricus (strain DSM 12597 / MM 739), this protein is UPF0282 protein TSIB_1029.